Here is a 499-residue protein sequence, read N- to C-terminus: Probable aspartyl protease At4g16563 (499 aa).

The first 26 residues, 1-26, serve as a signal peptide directing secretion; the sequence is MKTCLIFFLYTTILQYYFHFSVSSLS. The region spanning 83 to 487 is the Peptidase A1 domain; it reads YLISLSVGSS…DLLNRRVGFA (405 aa). Aspartate 101 is an active-site residue. Cysteine 111 and cysteine 119 are oxidised to a cystine. Asparagine 175 and asparagine 211 each carry an N-linked (GlcNAc...) asparagine glycan. Aspartate 353 is an active-site residue. Cysteines 396 and 445 form a disulfide. Asparagine 400 and asparagine 415 each carry an N-linked (GlcNAc...) asparagine glycan.

Belongs to the peptidase A1 family.

The sequence is that of Probable aspartyl protease At4g16563 from Arabidopsis thaliana (Mouse-ear cress).